The following is a 101-amino-acid chain: UPF0235 protein Mevan_0378 (101 aa).

It belongs to the UPF0235 family.

The protein is UPF0235 protein Mevan_0378 of Methanococcus vannielii (strain ATCC 35089 / DSM 1224 / JCM 13029 / OCM 148 / SB).